Here is a 404-residue protein sequence, read N- to C-terminus: Argininosuccinate synthase (404 aa).

ATP is bound by residues 10–18 (AFSGGLDTS) and Ala-37. The L-citrulline site is built by Tyr-88 and Ser-93. Residue Gly-118 participates in ATP binding. Thr-120, Asn-124, and Asp-125 together coordinate L-aspartate. Asn-124 is an L-citrulline binding site. The L-citrulline site is built by Arg-128, Ser-179, Ser-188, Glu-264, and Tyr-276.

Belongs to the argininosuccinate synthase family. Type 1 subfamily. In terms of assembly, homotetramer.

The protein localises to the cytoplasm. It catalyses the reaction L-citrulline + L-aspartate + ATP = 2-(N(omega)-L-arginino)succinate + AMP + diphosphate + H(+). The protein operates within amino-acid biosynthesis; L-arginine biosynthesis; L-arginine from L-ornithine and carbamoyl phosphate: step 2/3. This is Argininosuccinate synthase from Nitrosomonas eutropha (strain DSM 101675 / C91 / Nm57).